The primary structure comprises 135 residues: Salivary protein 15 (135 aa).

A signal peptide spans 1–21 (MESFVAMKVVCILFLVGVVAA). Asparagine 22 is a glycosylation site (N-linked (GlcNAc...) asparagine). The interval 48 to 67 (PNYISNHQKLALKLLKICKD) is required for Borrelia OspC-binding. N-linked (GlcNAc...) asparagine glycans are attached at residues asparagine 92 and asparagine 104. The interval 116 to 135 (GPNGQTCAEKNKCVGHIPGC) is CD4-binding.

The protein belongs to the salp15 family. Monomer. Interacts with host CD4. Interacts with host DC-SIGN (CD209). As to quaternary structure, (Microbial infection) Interacts with Borrelia outer surface protein C (OspC). In terms of processing, glycosylated. In terms of tissue distribution, expressed in salivary glands. Detected in host skin, at the site of natural inoculation.

Its subcellular location is the secreted. Salivary tick protein that downregulates host immune system by binding to both dendritic cells, and CD4(+) T cells. Specifically binds to the CD4 coreceptor on T cells. This interaction prevents the activation of the Src kinase, Lck, and its downstream substrate Zap-70, and results in deficient activation of PLCgamma1, the repression of calcium fluxes triggered by T-cell antigen receptor (TCR) ligation, and a subsequent reduction in interleukin-2 production. This salivary protein also binds to DC-SIGN (CD209) on dendritic cells (DC) and activates the Raf-1 kinase/MEK signaling pathway that results in down-regulating expression of pro-inflammatory cytokines. Furthermore, it inhibits T cell proliferation induced by DCs. It also inhibits in vitro keratinocyte inflammation induced by Borrelia burgdorferi or by the major outer surface protein (OspC) of Borrelia. In addition, it downregulates chemokines and monocyte chemoattractant protein 1, as well as several antimicrobial peptides such as defensins, cathelicidin, psoriasin, and RNase 7. Apart from its immunomodulatory activities, it is also associated with protection of Borrelia spirochetes from antibody-mediated killing through its binding to OspC. In vivo, tests on different immune disease animal models show promising therapeutic results, e.g., in inhibiting HIV infection, experimental autoimmune encephalomyelitis, transplantation rejection, and asthma. Functionally, (Microbial infection) Protects Borrelia garinii (strains A87S and VSBP) from host complement-mediated killing. In terms of biological role, (Microbial infection) Partially protects Borrelia burgdorferi (strains VS215 and B31) from host complement-mediated killing. The chain is Salivary protein 15 from Ixodes scapularis (Black-legged tick).